Here is an 87-residue protein sequence, read N- to C-terminus: Translation initiation factor IF-1 2 (87 aa).

In terms of domain architecture, S1-like spans 1–72; that stretch reads MAKEELLELD…TKGRINFRHK (72 aa).

The protein belongs to the IF-1 family. Component of the 30S ribosomal translation pre-initiation complex which assembles on the 30S ribosome in the order IF-2 and IF-3, IF-1 and N-formylmethionyl-tRNA(fMet); mRNA recruitment can occur at any time during PIC assembly.

The protein resides in the cytoplasm. One of the essential components for the initiation of protein synthesis. Stabilizes the binding of IF-2 and IF-3 on the 30S subunit to which N-formylmethionyl-tRNA(fMet) subsequently binds. Helps modulate mRNA selection, yielding the 30S pre-initiation complex (PIC). Upon addition of the 50S ribosomal subunit IF-1, IF-2 and IF-3 are released leaving the mature 70S translation initiation complex. This chain is Translation initiation factor IF-1 2, found in Burkholderia vietnamiensis (strain G4 / LMG 22486) (Burkholderia cepacia (strain R1808)).